Reading from the N-terminus, the 137-residue chain is Large ribosomal subunit protein uL16c (137 aa).

It belongs to the universal ribosomal protein uL16 family. In terms of assembly, part of the 50S ribosomal subunit.

It localises to the plastid. Its subcellular location is the chloroplast. This is Large ribosomal subunit protein uL16c from Adiantum capillus-veneris (Maidenhair fern).